A 287-amino-acid polypeptide reads, in one-letter code: MALTEDKSDSDGRRWGKFKLPFRNSNSQAPSASSSSSMATSSSSVTSSHLNQNYIHQSRHFQYHGPPVVEGLGQNHHQSAATIPSMSSVARSLLPTKRRLKLDPSAKLYFPYEPGKQVRSAIKIKNTSKSHVAFKFQTTVPKSCFMRPAGAILAPGEEIIATVFKFVEPPENNEKPMEQKSGVKFKIMSLKMKVPTDYMPELFEEQKDHVSEEQVMRVVFLDPENPNSMMEKLKSQLAEADAADEARKKASEGIVGPKPIGEGLVIDEWKQRRERYLAQQQGGVDAA.

The segment covering 1-14 (MALTEDKSDSDGRR) has biased composition (basic and acidic residues). The interval 1 to 45 (MALTEDKSDSDGRRWGKFKLPFRNSNSQAPSASSSSSMATSSSSV) is disordered. Low complexity predominate over residues 25-45 (SNSQAPSASSSSSMATSSSSV). Positions 99–221 (RLKLDPSAKL…EEQVMRVVFL (123 aa)) constitute an MSP domain.

It belongs to the VAMP-associated protein (VAP) (TC 9.B.17) family.

In terms of biological role, may play a role in vesicle trafficking. The protein is Vesicle-associated protein 4-3 (PVA43) of Arabidopsis thaliana (Mouse-ear cress).